The following is a 101-amino-acid chain: Small ribosomal subunit protein uS14 (101 aa).

Belongs to the universal ribosomal protein uS14 family. As to quaternary structure, part of the 30S ribosomal subunit. Contacts proteins S3 and S10.

Binds 16S rRNA, required for the assembly of 30S particles and may also be responsible for determining the conformation of the 16S rRNA at the A site. This Gluconobacter oxydans (strain 621H) (Gluconobacter suboxydans) protein is Small ribosomal subunit protein uS14.